The following is a 141-amino-acid chain: Translation initiation factor 2 subunit beta (141 aa).

The protein belongs to the eIF-2-beta/eIF-5 family. As to quaternary structure, heterotrimer composed of an alpha, a beta and a gamma chain.

EIF-2 functions in the early steps of protein synthesis by forming a ternary complex with GTP and initiator tRNA. This Sulfolobus acidocaldarius (strain ATCC 33909 / DSM 639 / JCM 8929 / NBRC 15157 / NCIMB 11770) protein is Translation initiation factor 2 subunit beta.